Here is an 864-residue protein sequence, read N- to C-terminus: N-alpha-acetyltransferase 16, NatA auxiliary subunit (864 aa).

7 TPR repeats span residues 46-79 (GETLAMKGLILNCLGKREEAYEFVRKGLRSDVRS), 80-113 (HVCWHVYGLLQRSDKKYDEAIKCYRNALKLDKDN), 148-184 (RASWIGYAIAYHLLKDYDTALKLLEEFRQTQQVPPNK), 224-257 (LLVEEIKGEMLLKLGRLKEASEVFRNLIDWNAEN), 374-407 (IWVQYFLAQHYDKLGQYFLALEYINAVIASTPTL), 408-441 (IELFYMKAKIYKHMGNLKEAAQWMDEAQSLDTAD), and 485-514 (MWFETECISAYQRLGRYGDALKKCHEVERH). The interval 594–646 (KMLSKQRRAQKKAKVEEERKHTERERQQKNQKKKREEEEEVTSGHKEELIPEK) is disordered. The segment covering 595–605 (MLSKQRRAQKK) has biased composition (basic residues). 2 stretches are compositionally biased toward basic and acidic residues: residues 606–621 (AKVEEERKHTERERQQ) and 635–646 (TSGHKEELIPEK).

Component of the N-terminal acetyltransferase A (NatA) complex composed of NAA10 and NAA16. In terms of tissue distribution, highest levels in the kidney and testes. Moderate expression in the liver, thymus and skin.

Auxillary subunit of the N-terminal acetyltransferase A (NatA) complex which displays alpha (N-terminal) acetyltransferase activity. This is N-alpha-acetyltransferase 16, NatA auxiliary subunit (Naa16) from Mus musculus (Mouse).